Consider the following 366-residue polypeptide: uncharacterized protein (366 aa).

It to B.subtilis XkdV.

This is an uncharacterized protein from Bacillus subtilis (strain 168).